The sequence spans 542 residues: Formate--tetrahydrofolate ligase (542 aa).

53 to 60 is an ATP binding site; that stretch reads TPAGEGKT.

It belongs to the formate--tetrahydrofolate ligase family.

It catalyses the reaction (6S)-5,6,7,8-tetrahydrofolate + formate + ATP = (6R)-10-formyltetrahydrofolate + ADP + phosphate. It participates in one-carbon metabolism; tetrahydrofolate interconversion. This is Formate--tetrahydrofolate ligase from Thermotoga petrophila (strain ATCC BAA-488 / DSM 13995 / JCM 10881 / RKU-1).